Reading from the N-terminus, the 822-residue chain is Valine--tRNA ligase (822 aa).

The 'HIGH' region motif lies at 41–51 (PNVTGQLHLGH). The 'KMSKS' region motif lies at 511 to 515 (KMSKS). Lys-514 lines the ATP pocket. Positions 765-822 (EQKGRELKEIQFLKSEILRAEKILTNKGFLEKAPREKIDLERTKLEKLKEKLAFYEKK) form a coiled coil.

Belongs to the class-I aminoacyl-tRNA synthetase family. ValS type 1 subfamily. Monomer.

It is found in the cytoplasm. The catalysed reaction is tRNA(Val) + L-valine + ATP = L-valyl-tRNA(Val) + AMP + diphosphate. Catalyzes the attachment of valine to tRNA(Val). As ValRS can inadvertently accommodate and process structurally similar amino acids such as threonine, to avoid such errors, it has a 'posttransfer' editing activity that hydrolyzes mischarged Thr-tRNA(Val) in a tRNA-dependent manner. The protein is Valine--tRNA ligase of Mesomycoplasma hyopneumoniae (strain 7448) (Mycoplasma hyopneumoniae).